The primary structure comprises 413 residues: Porin PorA (413 aa).

The first 22 residues, Met1–Ala22, serve as a signal peptide directing secretion. The disordered stretch occupies residues Thr265–Glu288.

This sequence belongs to the PorA family.

The protein localises to the secreted. It localises to the cell wall. In terms of biological role, forms water-filled channels that favor the permeation of cations. This chain is Porin PorA, found in Corynebacterium resistens (strain DSM 45100 / JCM 12819 / GTC 2026 / SICGH 158).